We begin with the raw amino-acid sequence, 979 residues long: Calsyntenin-1 (979 aa).

The signal sequence occupies residues 1–28 (MLRRPAPALAPAVRLLLAGLLCGGGVWA). Residues 29 to 859 (ARVNKHKPWL…PHPFAVVPST (831 aa)) lie on the Extracellular side of the membrane. Cadherin domains lie at 38-164 (LEPT…APVF) and 165-265 (KEKS…SPGW). N-linked (GlcNAc...) asparagine glycosylation is found at Asn346, Asn366, and Asn515. Residues 860-880 (ATVVIVVCVSFLVFMIILGVF) traverse the membrane as a helical segment. The Cytoplasmic segment spans residues 881-979 (RIRAAHQRTM…LEWDDSTLSY (99 aa)). Positions 915–979 (METYEDQHSS…LEWDDSTLSY (65 aa)) are disordered. Residues 925–959 (EEEEEEEEEEESEDGEEEEDITSAESESSEEEEGG) are compositionally biased toward acidic residues.

This sequence belongs to the calsyntenin family. In terms of assembly, directly interacts with APBA2. Forms a tripartite complex with APBA2 and APP. The CTF1 chain interacts with PSEN1. Interacts with KLC1 and APBB1. As to quaternary structure, interacts with APBB1; this interaction stabilizes AlcICD metabolism. Interacts with PSEN1. Post-translationally, proteolytically processed under normal cellular conditions. A primary zeta-cleavage generates a large extracellular (soluble) N-terminal domain (sAlc) and a short C-terminal transmembrane fragment (CTF1). A secondary cleavage catalyzed by presenilin gamma-secretase within the transmembrane domain releases the beta-Alc-alpha chain in the extracellular milieu and produces an intracellular fragment (AlcICD). Beta-Alc-alpha secretion is largely dependent upon PSEN1 and PSEN2. This processing is strongly suppressed in the tripartite complex formed with APBA2 and APP, which seems to prevent the association with PSEN1. In terms of tissue distribution, highly expressed in the brain (at protein level), with over 90% of the neurons expressing detectable amounts. In the brain, relatively high levels in the cerebral cortex, striatum, hippocampus and thalamus. Moderate levels in the cerebellum. Low levels in the olfactory bulb, midbrain and pons (at protein level). Not detected in Purkinje cells. Expressed at low levels in the lung (at protein level). At the mRNA level, weakly detected in the kidney, lung, skeletal muscle, heart and testis. Not expressed in the sciatic nerve fiber.

The protein localises to the postsynaptic cell membrane. The protein resides in the endoplasmic reticulum membrane. It localises to the golgi apparatus membrane. Its subcellular location is the cell projection. It is found in the neuron projection. The protein localises to the vesicle. The protein resides in the nucleus. Postsynaptic adhesion molecule that binds to presynaptic neurexins to mediate both excitatory and inhibitory synapse formation. Promotes synapse development by acting as a cell adhesion molecule at the postsynaptic membrane, which associates with neurexin-alpha at the presynaptic membrane. Also functions as a cargo in axonal anterograde transport by acting as a molecular adapter that promotes KLC1 association with vesicles. Complex formation with APBA2 and APP, stabilizes APP metabolism and enhances APBA2-mediated suppression of beta-APP40 secretion, due to the retardation of intracellular APP maturation. In terms of biological role, as intracellular fragment AlcICD, suppresses APBB1-dependent transactivation stimulated by APP C-terminal intracellular fragment (AICD), most probably by competing with AICD for APBB1-binding. Its function is as follows. In complex with APBA2 and C99, a C-terminal APP fragment, abolishes C99 interaction with PSEN1 and thus APP C99 cleavage by gamma-secretase, most probably through stabilization of the direct interaction between APBA2 and APP. This is Calsyntenin-1 from Mus musculus (Mouse).